The primary structure comprises 526 residues: Peptide chain release factor 3 (526 aa).

A tr-type G domain is found at 9 to 277 (DKRRTFAIIS…GIVEWAPKPL (269 aa)). Residues 18–25 (SHPDAGKT), 86–90 (DTPGH), and 140–143 (NKLD) each bind GTP.

The protein belongs to the TRAFAC class translation factor GTPase superfamily. Classic translation factor GTPase family. PrfC subfamily.

Its subcellular location is the cytoplasm. Its function is as follows. Increases the formation of ribosomal termination complexes and stimulates activities of RF-1 and RF-2. It binds guanine nucleotides and has strong preference for UGA stop codons. It may interact directly with the ribosome. The stimulation of RF-1 and RF-2 is significantly reduced by GTP and GDP, but not by GMP. This chain is Peptide chain release factor 3, found in Shewanella baltica (strain OS223).